Consider the following 102-residue polypeptide: Large ribosomal subunit protein bL21 (102 aa).

The protein belongs to the bacterial ribosomal protein bL21 family. In terms of assembly, part of the 50S ribosomal subunit. Contacts protein L20.

Functionally, this protein binds to 23S rRNA in the presence of protein L20. The sequence is that of Large ribosomal subunit protein bL21 from Bifidobacterium longum (strain DJO10A).